Here is a 390-residue protein sequence, read N- to C-terminus: Levoglucosan dehydrogenase (390 aa).

NADH-binding residues include Phe13, Met14, Glu43, Thr81, Asn83, His86, Glu103, Lys104, Ala130, and Asn132. Position 104 (Lys104) interacts with levoglucosan. Levoglucosan contacts are provided by Tyr133 and Gln163. The NADH site is built by Trp175 and Arg176. Positions 176, 189, and 193 each coordinate levoglucosan. Tyr335 is a binding site for NADH.

The protein belongs to the Gfo/Idh/MocA family. As to quaternary structure, homotetramer.

The enzyme catalyses levoglucosan + NAD(+) = 3-dehydrolevoglucosan + NADH + H(+). Its function is as follows. Catalyzes the oxidation of levoglucosan (1,6-anhydro-beta-D-glucose, LG) to 3-dehydrolevoglucosan (3-keto-LG). Exhibits high substrate specificity toward levoglucosan and NAD(+) for the oxidative reaction. Exhibits weak activities (about 4% compared with that of LG) toward L-sorbose and 1,5-anhydro-D-glucitol, and activity toward D-xylose is also detectable (1.7%). Can also efficiently catalyzes the NADH-dependent reduction (reverse reaction) of 3-keto-LG. In Pseudarthrobacter phenanthrenivorans (strain DSM 18606 / JCM 16027 / LMG 23796 / Sphe3) (Arthrobacter phenanthrenivorans), this protein is Levoglucosan dehydrogenase.